The primary structure comprises 280 residues: DegV domain-containing protein CA_C1624 (280 aa).

Positions 4–279 (IALITDSTSD…PGLLGVVIFK (276 aa)) constitute a DegV domain. Residues Thr60 and Ser93 each coordinate hexadecanoate.

Its function is as follows. May bind long-chain fatty acids, such as palmitate, and may play a role in lipid transport or fatty acid metabolism. This chain is DegV domain-containing protein CA_C1624, found in Clostridium acetobutylicum (strain ATCC 824 / DSM 792 / JCM 1419 / IAM 19013 / LMG 5710 / NBRC 13948 / NRRL B-527 / VKM B-1787 / 2291 / W).